The primary structure comprises 216 residues: ATP-dependent Clp protease proteolytic subunit 3 (216 aa).

Catalysis depends on serine 120, which acts as the Nucleophile. Histidine 145 is a catalytic residue.

Belongs to the peptidase S14 family. As to quaternary structure, fourteen ClpP subunits assemble into 2 heptameric rings which stack back to back to give a disk-like structure with a central cavity, resembling the structure of eukaryotic proteasomes.

The protein localises to the cytoplasm. The catalysed reaction is Hydrolysis of proteins to small peptides in the presence of ATP and magnesium. alpha-casein is the usual test substrate. In the absence of ATP, only oligopeptides shorter than five residues are hydrolyzed (such as succinyl-Leu-Tyr-|-NHMec, and Leu-Tyr-Leu-|-Tyr-Trp, in which cleavage of the -Tyr-|-Leu- and -Tyr-|-Trp bonds also occurs).. Its function is as follows. Cleaves peptides in various proteins in a process that requires ATP hydrolysis. Has a chymotrypsin-like activity. Plays a major role in the degradation of misfolded proteins. The protein is ATP-dependent Clp protease proteolytic subunit 3 of Prochlorococcus marinus (strain SARG / CCMP1375 / SS120).